Reading from the N-terminus, the 406-residue chain is Phosphopentomutase (406 aa).

Residues Asp-10, Asp-305, His-310, Asp-346, His-347, and His-358 each contribute to the Mn(2+) site.

This sequence belongs to the phosphopentomutase family. It depends on Mn(2+) as a cofactor.

It localises to the cytoplasm. The enzyme catalyses 2-deoxy-alpha-D-ribose 1-phosphate = 2-deoxy-D-ribose 5-phosphate. It catalyses the reaction alpha-D-ribose 1-phosphate = D-ribose 5-phosphate. The protein operates within carbohydrate degradation; 2-deoxy-D-ribose 1-phosphate degradation; D-glyceraldehyde 3-phosphate and acetaldehyde from 2-deoxy-alpha-D-ribose 1-phosphate: step 1/2. Functionally, isomerase that catalyzes the conversion of deoxy-ribose 1-phosphate (dRib-1-P) and ribose 1-phosphate (Rib-1-P) to deoxy-ribose 5-phosphate (dRib-5-P) and ribose 5-phosphate (Rib-5-P), respectively. The protein is Phosphopentomutase of Sinorhizobium medicae (strain WSM419) (Ensifer medicae).